The following is a 226-amino-acid chain: Exosome complex component rrp46 (226 aa).

A disordered region spans residues 205 to 226 (NESDGHENEKNPKEDVEMDVVA). Positions 207–219 (SDGHENEKNPKED) are enriched in basic and acidic residues.

This sequence belongs to the RNase PH family. Component of the RNA exosome complex. Specifically part of the catalytically inactive RNA exosome core complex (Exo-9) which may associate with the catalytic subunits rrp6 and dis3 in cytoplasmic- and nuclear-specific RNA exosome complex forms. Exo-9 is formed by a hexameric base ring of RNase PH domain-containing subunits and a cap ring consisting of csl4, rrp4 and rrp40.

The protein resides in the cytoplasm. The protein localises to the nucleus. It is found in the nucleolus. In terms of biological role, non-catalytic component of the RNA exosome complex which has 3'-&gt;5' exoribonuclease activity and participates in a multitude of cellular RNA processing and degradation events. In the nucleus, the RNA exosome complex is involved in proper maturation of stable RNA species such as rRNA, snRNA and snoRNA, in the elimination of RNA processing by-products and non-coding 'pervasive' transcripts, such as antisense RNA species and cryptic unstable transcripts (CUTs), and of mRNAs with processing defects, thereby limiting or excluding their export to the cytoplasm. In the cytoplasm, the RNA exosome complex is involved in general mRNA turnover and in RNA surveillance pathways, preventing translation of aberrant mRNAs. The catalytic inactive RNA exosome core complex of 9 subunits (Exo-9) is proposed to play a pivotal role in the binding and presentation of RNA for ribonucleolysis, and to serve as a scaffold for the association with catalytic subunits and accessory proteins or complexes. ski6 is part of the hexameric ring of RNase PH domain-containing subunits proposed to form a central channel which threads RNA substrates for degradation. The chain is Exosome complex component rrp46 (rrp46) from Schizosaccharomyces pombe (strain 972 / ATCC 24843) (Fission yeast).